A 377-amino-acid polypeptide reads, in one-letter code: Leukocyte elastase inhibitor (377 aa).

Met-1 bears the N-acetylmethionine mark.

This sequence belongs to the serpin family. Ov-serpin subfamily.

It is found in the cytoplasm. Functionally, regulates the activity of the neutrophil proteases. This chain is Leukocyte elastase inhibitor (serpinb1), found in Xenopus laevis (African clawed frog).